Here is a 180-residue protein sequence, read N- to C-terminus: Bifunctional protein PyrR (180 aa).

Residues 101 to 113 carry the PRPP-binding motif; that stretch reads LIVVDDVLFTGRT.

This sequence belongs to the purine/pyrimidine phosphoribosyltransferase family. PyrR subfamily. Homodimer and homohexamer; in equilibrium.

It carries out the reaction UMP + diphosphate = 5-phospho-alpha-D-ribose 1-diphosphate + uracil. Regulates transcriptional attenuation of the pyrimidine nucleotide (pyr) operon by binding in a uridine-dependent manner to specific sites on pyr mRNA. This disrupts an antiterminator hairpin in the RNA and favors formation of a downstream transcription terminator, leading to a reduced expression of downstream genes. Its function is as follows. Also displays a weak uracil phosphoribosyltransferase activity which is not physiologically significant. This Bacillus pumilus (strain SAFR-032) protein is Bifunctional protein PyrR.